The following is a 532-amino-acid chain: 2,3-bisphosphoglycerate-independent phosphoglycerate mutase (532 aa).

Aspartate 15 and serine 65 together coordinate Mn(2+). The active-site Phosphoserine intermediate is the serine 65. Substrate-binding positions include histidine 126, 156 to 157 (RD), arginine 188, arginine 194, 258 to 261 (RPDR), and lysine 331. Mn(2+) is bound by residues aspartate 398, histidine 402, aspartate 439, histidine 440, and histidine 457.

This sequence belongs to the BPG-independent phosphoglycerate mutase family. As to quaternary structure, monomer. It depends on Mn(2+) as a cofactor.

It catalyses the reaction (2R)-2-phosphoglycerate = (2R)-3-phosphoglycerate. It functions in the pathway carbohydrate degradation; glycolysis; pyruvate from D-glyceraldehyde 3-phosphate: step 3/5. Catalyzes the interconversion of 2-phosphoglycerate and 3-phosphoglycerate. The polypeptide is 2,3-bisphosphoglycerate-independent phosphoglycerate mutase (Microcystis aeruginosa (strain NIES-843 / IAM M-2473)).